A 2080-amino-acid chain; its full sequence is MAASERRAFAHKINRTVAAEVRKQVSRERSGSPHSSRRSSSSLGVPLTEVIEPLDFEDVLLSRPPEVEPGPLRDLIEFPVDDLELLKQPRECRTTESGVPEDGQLDAQVRAAVEMYSEDWVIVRRRYQHLSTAYSPITTETQREWQKGLTCQVFEQDTPGDERTGPEDVDDPQHCSGSPEDTPRSSGASGIFSLRNLAADSLLPTLLEQAAPEDVDRRNEALRRQHRAPTLLTLYPAPDEDEAVERCSRPEPPREHFGQRILVKCLSLKFEIEIEPIFGTLALYDVREKKKISENFYFDLNSDSVKGLLRAHGTHPAISTLARSAIFSVTYPSPDIFLVVKLEKVLQQGDISECCEPYMVMKEADTAKNKEKLEKLRLAAEQFCTRLGRYRMPFAWTAVHLANIVSRPQDRDSDSEGERRPTWAERRRRGPQDRGYSGDDACSFSSFRPATLTVTNFFKQEAERLSDEDLFKFLADMRRPSSLLRRLRPVTAQLKLDISPAPENLHFCLSPDLLHVKPYPDPRGRPTKEILEFPAREVYAPHSCYRNLLFVYPHSLNFSSRQGSVRNLAVRIQYMAGEDQSQALPVIFGKSSCSEFTREAFTPVVYHNKSPEFYEEFKLRLPACVTENHHLFFTFYHVSCQPRPGTALETPVGFTWIPLLQHGRLRTGPFCLPVSVDQPPPSYSVLTPDVALPGMRWVDGHKGVFSVELTAVSSVHPQDPHLDKFFTLVHVLEEGIFPFRLKETVLSEGTMEQELRASLAALRLASPEPLVAFSHLVLDKLVRLVVRPPIICGQMVNLGRGAFEAMAHVASLVHRNLEAVQDSRGHCPLLASYVHYAFRLPGGDLSLPGEAPPATVQAATLARGSGRPASLYLARSKSISSSNPDLAVVPGSVDDEVSRILASKGVDRSHSWVNSAYAPGGSKAVLRRVPPYCGADPRQLLHEELALQWVVSGSAVRELVLQHAWFFFQLMVKSMELHLLLGQRLDTPRKLRFPGRFLDDIAALVASVGLEVITRVHKDMKLAERLNASLAFFLSDLLSIADRGYIFSLVRAHYKQVATRLQSAPNPTALLTLRMDFTRILCSHEHYVTLNLPCCPLSPPASPSPSVSSTTSQSSTFSSQAPDPKVTSMFELSGPFRQQHFLSGLLLTELALALDPEAEGASLLHKKAISAVHSLLCSHDVDSRYAEATVKAKVAELYLPLLSLARDTLPQLHGFAEGSGQRSRLASMLDSDTEGEGDIGSTINPSVAMAIAGGPLAPGSRTSISQGPSTAARSGCPLSAESSRTLLVCVLWVLKNAEPTLLQRWAADLALPQLGRLLDLLYLCLAAFEYKGKKAFERINSLTFKKSLDMKARLEEAILGTIGARQEMVRRSRERSPFGNQENVRWRKSATHWRQTSDRVDKTKDEMEHEALVDGNLATEASLVVLDTLETIVQTVMLSEARESILSAVLKVVLYSLGSAQSALFLQHGLATQRALVSKFPELLFEEDTELCADLCLRLLRHCGSRISTIRMHASASLYLLMRQNFEIGHNFARVKMLVTMSLSSLVGTTQNFSEEHLRKSLKTILTYAEEDIGLRDSTFAEQVQDLMFNLHMILTDTVKMKEHQEDPEMLMDLMYRIARGYQGSPDLRLTWLQNMAGKHAELGNHAEAAQCMVHAAALVAEYLALLEDSRHLPVGCVSFQNVSSNVLEESAISDDILSPDEEGFCSGKNFTELGLVGLLEQAAGYFTMGGLYEAVNEVYKNLIPILEAHRDYKKLAAVHGKLQEAFTKIMHQSSGWERVFGTYFRVGFYGTRFGDLDEQEFVYKEPSITKLAEISHRLEEFYTERFGDDVVEIIKDSNPVDKSKLDPQKAYIQITYVEPHFDTYELKDRVTYFDRNYGLRAFLFCTPFTPDGRAHGELAEQHKRKTLLSTEHAFPYIKTRIRVCHREETVLTPVEVAIEDMQKKTRELAFATEQDPPDAKMLQMVLQGSVGPTVNQGPLEVAQVFLSEIPEDPKLFRHHNKLRLCFKDFCKKCEDALRKNKALIGPDQKEYHRELERHYSRLREALQPLLTQRLPQLLAPSSTSLRSSMNRSSFRKADL.

Residues E20–G31 are compositionally biased toward basic and acidic residues. Disordered stretches follow at residues E20–G44, Q156–S189, and P408–A441. The segment covering S32–S42 has biased composition (low complexity). S178 carries the post-translational modification Phosphoserine. A compositionally biased stretch (basic and acidic residues) spans P408 to E425. Residues R546–V712 form the C2 DOCK-type domain. R863 bears the Omega-N-methylarginine mark. 3 positions are modified to phosphoserine: S870, S878, and S882. The tract at residues A1101–D1123 is disordered. The span at S1104–P1122 shows a compositional bias: low complexity. At S1341 the chain carries Phosphoserine. In terms of domain architecture, DOCKER spans R1620–P2056. Residue T2064 is modified to Phosphothreonine. S2065 and S2069 each carry phosphoserine.

The protein belongs to the DOCK family. As to expression, widely expressed with highest levels in lung and heart.

It is found in the cytoplasm. Its subcellular location is the perinuclear region. Its function is as follows. Acts as a guanine nucleotide exchange factor (GEF) for CDC42 and RAC1 small GTPases. Through its activation of CDC42 and RAC1, regulates neurite outgrowth in an vitro differentiation system. This Mus musculus (Mouse) protein is Dedicator of cytokinesis protein 6 (Dock6).